A 352-amino-acid polypeptide reads, in one-letter code: MAQTPAFNKPKVELHVHLDGAIKPETILYYGKKRGIDLPADTVEGLRNIIGMDKPLSLPDFLAKFDYYMPAIAGCREAIKRIAYEFVEMKAKEGVVYVEVRYSPHLLANSKVDPIPWNQAEGDLTPDEVVDLVNQGLQEGEQAFGIKVRSILCCMRHQPSWSPEVLELCKKYHQKTVVAMDLAGDETIEGSSLFPGHVEAYEGAVKDGIHRTVHAGEVGSAEVVREAVDILKTERVGHGYHTIEDEALYNRLLKENMHFEVCPWSSYLTGAWNPKTTHAVVRFKDDQANYSLNSDDPLIFKSTVDTDYQMVKKDMGFTEEEFKRLNINAAKSSFLPEDEKKELLERLYKEYQ.

Ala-2 is modified (N-acetylalanine). Residues His-15 and His-17 each contribute to the Zn(2+) site. Substrate is bound by residues His-17 and Asp-19. At Lys-54 the chain carries N6-acetyllysine. Gly-184 contacts substrate. His-214 is a Zn(2+) binding site. The active-site Proton donor is the Glu-217. Position 232 is an N6-acetyllysine (Lys-232). Asp-295 is a Zn(2+) binding site. Asp-296 is a substrate binding site.

Belongs to the metallo-dependent hydrolases superfamily. Adenosine and AMP deaminases family. As to quaternary structure, interacts with DPP4 (via extracellular domain). Interacts with PLG (via Kringle 4 domain); the interaction stimulates PLG activation when in complex with DPP4. It depends on Zn(2+) as a cofactor. In terms of tissue distribution, detected in brain and liver (at protein level).

The protein localises to the cell membrane. Its subcellular location is the cell junction. It localises to the cytoplasmic vesicle lumen. It is found in the cytoplasm. The protein resides in the lysosome. It catalyses the reaction adenosine + H2O + H(+) = inosine + NH4(+). The catalysed reaction is 2'-deoxyadenosine + H2O + H(+) = 2'-deoxyinosine + NH4(+). The enzyme catalyses cordycepin + H2O + H(+) = 3'-deoxyinosine + NH4(+). Catalyzes the hydrolytic deamination of adenosine and 2-deoxyadenosine. Plays an important role in purine metabolism and in adenosine homeostasis. Modulates signaling by extracellular adenosine, and so contributes indirectly to cellular signaling events. Acts as a positive regulator of T-cell coactivation, by binding DPP4. Its interaction with DPP4 regulates lymphocyte-epithelial cell adhesion. Enhances dendritic cell immunogenicity by affecting dendritic cell costimulatory molecule expression and cytokines and chemokines secretion. Enhances CD4+ T-cell differentiation and proliferation. Acts as a positive modulator of adenosine receptors ADORA1 and ADORA2A, by enhancing their ligand affinity via conformational change. Stimulates plasminogen activation. Plays a role in male fertility. Plays a protective role in early postimplantation embryonic development. Also responsible for the deamination of cordycepin (3'-deoxyadenosine), a fungal natural product that shows antitumor, antibacterial, antifungal, antivirus, and immune regulation properties. The chain is Adenosine deaminase (Ada) from Rattus norvegicus (Rat).